Here is a 3010-residue protein sequence, read N- to C-terminus: Probable polyketide synthase 2 (3010 aa).

The 424-residue stretch at 9–432 (SRDVAVIGIG…GSNACLLLSE (424 aa)) folds into the Ketosynthase family 3 (KS3) domain. Active-site for beta-ketoacyl synthase activity residues include Cys-174, His-313, and His-353. The interval 629–662 (GINPSINVGHSFGEISSACCSGMLDLETACFIVY) is acyl/malonyl transferase. Catalysis depends on Ser-639, which acts as the For acyl/malonyl transferase activity. The interval 944-1063 (ATQLGYRNDV…ARFSVLKHNS (120 aa)) is N-terminal hotdog fold. The PKS/mFAS DH domain occupies 944–1235 (ATQLGYRNDV…YSSISTDIKN (292 aa)). The active-site Proton acceptor; for dehydratase activity is the His-976. A C-terminal hotdog fold region spans residues 1080–1235 (NWTTIKRKEF…YSSISTDIKN (156 aa)). Asp-1146 acts as the Proton donor; for dehydratase activity in catalysis. One can recognise a Carrier domain in the interval 2482-2559 (DNELSIRDDI…QLIQAVIQAV (78 aa)). The residue at position 2519 (Ser-2519) is an O-(pantetheine 4'-phosphoryl)serine.

It depends on pantetheine 4'-phosphate as a cofactor.

Probable polyketide synthase. The chain is Probable polyketide synthase 2 (pks2) from Dictyostelium discoideum (Social amoeba).